The primary structure comprises 125 residues: UPF0102 protein ABO_0585 (125 aa).

This sequence belongs to the UPF0102 family.

The protein is UPF0102 protein ABO_0585 of Alcanivorax borkumensis (strain ATCC 700651 / DSM 11573 / NCIMB 13689 / SK2).